The sequence spans 1704 residues: Phospholipid-transporting ATPase ABCA3 (1704 aa).

An N-linked (GlcNAc...) asparagine glycan is attached at Asn-14. Residues 22–42 (VLVTVLELFLPLLFSGILIWL) form a helical membrane-spanning segment. Asn-53, Asn-124, and Asn-140 each carry an N-linked (GlcNAc...) asparagine glycan. A run of 6 helical transmembrane segments spans residues 261 to 283 (YQLPLLLLLSFTYTALTIARAVV), 307 to 327 (AWFLLFFLFLLIAASFMTLLF), 344 to 364 (SLVLAFLLCFAISTISFSFMV), 373 to 393 (MAAAFGGFLYFFTYIPYFFVA), 405 to 425 (LCSCLLSNVAMAMGAQLIGKF), and 447 to 467 (FCFGQVLGMLLLDSVLYGLVT). Residues 530-763 (IKIKHLSKVF…YGAGYHMTLV (234 aa)) enclose the ABC transporter 1 domain. Residue 566 to 573 (GHNGAGKT) participates in ATP binding. N-linked (GlcNAc...) asparagine glycosylation is found at Asn-620 and Asn-783. 7 helical membrane passes run 925 to 945 (MVAAQVLVPLTCVTLALLAIN), 1100 to 1120 (IALNLLFAMAFLASTFSILAV), 1144 to 1164 (SALLWDLISFLIPSLLLLVVF), 1183 to 1203 (LLLLLYGWAIIPLMYLMNFFF), 1213 to 1233 (LTIFNILSGIATFLMVTIMRI), 1245 to 1265 (LDHVFLVLPNHCLGMAVSSFY), and 1306 to 1326 (FVASMAASGCAYLILLFLIET). Residues 1381–1614 (LIIKELSKVY…FGSGYSLRAK (234 aa)) enclose the ABC transporter 2 domain. An ATP-binding site is contributed by 1416 to 1423 (GFNGAGKT).

The protein belongs to the ABC transporter superfamily. ABCA family. Homooligomer; disulfide-linked. Post-translationally, N-glycosylated. Localization at intracellular vesicles is accompanied by processing of oligosaccharide from high mannose type to complex type. N-linked glycosylation at Asn-124 and Asn-140 is required for stability and efficient anterograde trafficking and prevents from proteasomal degradation. Proteolytically cleaved by CTSL and to a lower extent by CTSB within multivesicular bodies (MVB) and lamellar bodies (LB) leading to a mature form of 150 kDa. As to expression, expressed in brain, pancreas, skeletal muscle and heart. Highly expressed in the lung in an AT2-cell-specific manner. Weakly expressed in placenta, kidney and liver. Also expressed in medullary thyroid carcinoma cells (MTC) and in C-cell carcinoma.

Its subcellular location is the endosome. It localises to the multivesicular body membrane. The protein localises to the cytoplasmic vesicle membrane. It is found in the late endosome membrane. The protein resides in the lysosome membrane. The catalysed reaction is ATP + H2O + xenobioticSide 1 = ADP + phosphate + xenobioticSide 2.. It carries out the reaction a 1,2-diacyl-sn-glycero-3-phosphocholine(in) + ATP + H2O = a 1,2-diacyl-sn-glycero-3-phosphocholine(out) + ADP + phosphate + H(+). The enzyme catalyses ATP + H2O + phospholipidSide 1 = ADP + phosphate + phospholipidSide 2.. It catalyses the reaction 1,2-dihexadecanoyl-sn-glycero-3-phosphocholine(in) + ATP + H2O = 1,2-dihexadecanoyl-sn-glycero-3-phosphocholine(out) + ADP + phosphate + H(+). The catalysed reaction is cholesterol(in) + ATP + H2O = cholesterol(out) + ADP + phosphate + H(+). It carries out the reaction a 1,2-diacyl-sn-glycero-3-phospho-(1'-sn-glycerol)(in) + ATP + H2O = a 1,2-diacyl-sn-glycero-3-phospho-(1'-sn-glycerol)(out) + ADP + phosphate + H(+). Its activity is regulated as follows. The ATP-dependent phosphatidylcholine transport is competitively inhibited by miltefosine. Functionally, catalyzes the ATP-dependent transport of phospholipids such as phosphatidylcholine and phosphoglycerol from the cytoplasm into the lumen side of lamellar bodies, in turn participates in the lamellar bodies biogenesis and homeostasis of pulmonary surfactant. Transports preferentially phosphatidylcholine containing short acyl chains. In addition plays a role as an efflux transporter of miltefosine across macrophage membranes and free cholesterol (FC) through intralumenal vesicles by removing FC from the cell as a component of surfactant and protects cells from free cholesterol toxicity. The sequence is that of Phospholipid-transporting ATPase ABCA3 from Homo sapiens (Human).